Reading from the N-terminus, the 226-residue chain is Phosphoglycolate phosphatase (226 aa).

Residue Asp-8 is the Nucleophile of the active site. Positions 8 and 10 each coordinate Mg(2+). Lys-152 serves as a coordination point for substrate. Mg(2+)-binding residues include Asp-175 and Asp-179.

It belongs to the archaeal SPP-like hydrolase family. Mg(2+) serves as cofactor.

The enzyme catalyses 2-phosphoglycolate + H2O = glycolate + phosphate. In terms of biological role, catalyzes the dephosphorylation of 2-phosphoglycolate. This Natronomonas pharaonis (strain ATCC 35678 / DSM 2160 / CIP 103997 / JCM 8858 / NBRC 14720 / NCIMB 2260 / Gabara) (Halobacterium pharaonis) protein is Phosphoglycolate phosphatase.